Consider the following 603-residue polypeptide: Grainyhead-like protein 3 homolog (603 aa).

The interval 30–95 (EAWKTYLENP…QGKKFYHSMD (66 aa)) is transcription activation. In terms of domain architecture, Grh/CP2 DB spans 226-461 (GLKSDFEYTL…DLETQPVLFI (236 aa)).

The protein belongs to the grh/CP2 family. Grainyhead subfamily. As to quaternary structure, homodimer, also forms heterodimers with GRHL1 and GRHL2. Interacts with LMO4.

The protein resides in the nucleus. In terms of biological role, transcription factor playing important roles in primary neurulation and in the differentiation of stratified epithelia of both ectodermal and endodermal origin. Binds directly to the consensus DNA sequence 5'-AACCGGTT-3' acting as an activator and repressor on distinct target genes. Essential for epidermal differentiation and barrier formation at the end of embryogenesis with TGM3 as critical direct target. Exhibits functional redundancy with GRHL2 in epidermal morphogenetic events such as eyelid fusion and epidermal wound repair. Despite being dispensable during normal epidermal homeostasis in the adulthood, is again required for barrier repair after immune-mediated epidermal damage, regulates distinct gene batteries in embryonic epidermal differentiation and adult epidermal barrier reformation after injury. Plays unique and cooperative roles with GRHL2 in establishing distinct zones of primary neurulation. Essential for spinal closure, functions cooperatively with GRHL2 in closure 2 (forebrain/midbrain boundary) and posterior neuropore closure. Also required for proper development of the oral periderm. No genetic interaction with GRHL1, no functional cooperativity due to diverse target gene selectivity. The chain is Grainyhead-like protein 3 homolog from Mus musculus (Mouse).